The following is a 499-amino-acid chain: Pyruvate kinase 1 (499 aa).

Arg50 is a binding site for substrate. 4 residues coordinate K(+): Asn52, Ser54, Asp84, and Thr85. 52–55 (NFSH) provides a ligand contact to ATP. Arg91 provides a ligand contact to ATP. Residue Glu241 coordinates Mg(2+). 3 residues coordinate substrate: Gly264, Asp265, and Thr297. Asp265 serves as a coordination point for Mg(2+).

Belongs to the pyruvate kinase family. As to quaternary structure, homotetramer. Mg(2+) is required as a cofactor. The cofactor is K(+).

It catalyses the reaction pyruvate + ATP = phosphoenolpyruvate + ADP + H(+). The protein operates within carbohydrate degradation; glycolysis; pyruvate from D-glyceraldehyde 3-phosphate: step 5/5. With respect to regulation, activated by fructose 2,6-bisphosphate, activated by the effector in a cooperative manner. The polypeptide is Pyruvate kinase 1 (PYK1) (Trypanosoma brucei brucei).